Consider the following 228-residue polypeptide: ATP synthase subunit a (228 aa).

7 consecutive transmembrane segments (helical) span residues 16-36, 45-65, 80-100, 106-126, 138-158, 178-198, and 201-221; these read GQEW…FIIA, LVPT…ISMG, LIGS…IPGF, NINF…YLGI, FMGP…ISHL, FLMV…FFLL, and FGVL…AGSI.

It belongs to the ATPase A chain family. As to quaternary structure, F-type ATPases have 2 components, CF(1) - the catalytic core - and CF(0) - the membrane proton channel. CF(1) has five subunits: alpha(3), beta(3), gamma(1), delta(1), epsilon(1). CF(0) has three main subunits: a(1), b(2) and c(9-12). The alpha and beta chains form an alternating ring which encloses part of the gamma chain. CF(1) is attached to CF(0) by a central stalk formed by the gamma and epsilon chains, while a peripheral stalk is formed by the delta and b chains.

It is found in the cell inner membrane. Functionally, key component of the proton channel; it plays a direct role in the translocation of protons across the membrane. This Aliarcobacter butzleri (strain RM4018) (Arcobacter butzleri) protein is ATP synthase subunit a.